Reading from the N-terminus, the 440-residue chain is Ribosomal protein uS12 methylthiotransferase RimO (440 aa).

The 111-residue stretch at Pro-6–Pro-116 folds into the MTTase N-terminal domain. 6 residues coordinate [4Fe-4S] cluster: Cys-15, Cys-51, Cys-80, Cys-149, Cys-153, and Cys-156. Residues Leu-135–Ala-373 enclose the Radical SAM core domain. The region spanning Gln-376–Val-440 is the TRAM domain.

This sequence belongs to the methylthiotransferase family. RimO subfamily. The cofactor is [4Fe-4S] cluster.

The protein resides in the cytoplasm. The catalysed reaction is L-aspartate(89)-[ribosomal protein uS12]-hydrogen + (sulfur carrier)-SH + AH2 + 2 S-adenosyl-L-methionine = 3-methylsulfanyl-L-aspartate(89)-[ribosomal protein uS12]-hydrogen + (sulfur carrier)-H + 5'-deoxyadenosine + L-methionine + A + S-adenosyl-L-homocysteine + 2 H(+). In terms of biological role, catalyzes the methylthiolation of an aspartic acid residue of ribosomal protein uS12. The protein is Ribosomal protein uS12 methylthiotransferase RimO of Pseudomonas paraeruginosa (strain DSM 24068 / PA7) (Pseudomonas aeruginosa (strain PA7)).